Reading from the N-terminus, the 239-residue chain is Phosphoribosylaminoimidazole-succinocarboxamide synthase (239 aa).

The protein belongs to the SAICAR synthetase family.

It carries out the reaction 5-amino-1-(5-phospho-D-ribosyl)imidazole-4-carboxylate + L-aspartate + ATP = (2S)-2-[5-amino-1-(5-phospho-beta-D-ribosyl)imidazole-4-carboxamido]succinate + ADP + phosphate + 2 H(+). It participates in purine metabolism; IMP biosynthesis via de novo pathway; 5-amino-1-(5-phospho-D-ribosyl)imidazole-4-carboxamide from 5-amino-1-(5-phospho-D-ribosyl)imidazole-4-carboxylate: step 1/2. The sequence is that of Phosphoribosylaminoimidazole-succinocarboxamide synthase from Shouchella clausii (strain KSM-K16) (Alkalihalobacillus clausii).